The chain runs to 410 residues: Elongation factor Tu, chloroplastic (410 aa).

One can recognise a tr-type G domain in the interval 10-214; that stretch reads KPHVNIGTIG…NVDEYIPTPE (205 aa). Residues 19–26 are G1; that stretch reads GHVDHGKT. 19-26 serves as a coordination point for GTP; the sequence is GHVDHGKT. Mg(2+) is bound at residue Thr-26. The segment at 60-64 is G2; that stretch reads GITIN. The tract at residues 81-84 is G3; sequence DCPG. Residues 81–85 and 136–139 contribute to the GTP site; these read DCPGH and NKED. Positions 136–139 are G4; the sequence is NKED. Residues 174 to 176 are G5; sequence SAL.

It belongs to the TRAFAC class translation factor GTPase superfamily. Classic translation factor GTPase family. EF-Tu/EF-1A subfamily.

The protein resides in the plastid. The protein localises to the chloroplast stroma. It carries out the reaction GTP + H2O = GDP + phosphate + H(+). Its function is as follows. GTP hydrolase that promotes the GTP-dependent binding of aminoacyl-tRNA to the A-site of ribosomes during protein biosynthesis. This Bigelowiella natans (Pedinomonas minutissima) protein is Elongation factor Tu, chloroplastic (tufA).